The sequence spans 357 residues: Sorbitol dehydrogenase (357 aa).

Residue Ala2 is modified to N-acetylalanine. Cys45 serves as a coordination point for Zn(2+). Residue Tyr51 participates in substrate binding. Zn(2+)-binding residues include His70, Glu71, and Glu156. Glu156 contributes to the substrate binding site. Phosphoserine is present on Ser169. Residues Ile184, Asp204, Arg209, 273-275 (VGM), and 297-299 (VFR) each bind NAD(+). Positions 299 and 300 each coordinate substrate.

The protein belongs to the zinc-containing alcohol dehydrogenase family. Homotetramer; dimer of dimers. Zn(2+) serves as cofactor. As to expression, expressed in liver and testis.

It localises to the mitochondrion membrane. It is found in the cell projection. The protein resides in the cilium. Its subcellular location is the flagellum. It catalyses the reaction keto-D-fructose + NADH + H(+) = D-sorbitol + NAD(+). The enzyme catalyses xylitol + NAD(+) = D-xylulose + NADH + H(+). It carries out the reaction L-iditol + NAD(+) = keto-L-sorbose + NADH + H(+). Functionally, polyol dehydrogenase that catalyzes the reversible NAD(+)-dependent oxidation of various sugar alcohols. Is active with D-sorbitol (D-glucitol) leading to the C2-oxidized product D-fructose. Is a key enzyme in the polyol pathway that interconverts glucose and fructose via sorbitol, which constitutes an important alternate route for glucose metabolism. May play a role in sperm motility by using sorbitol as an alternative energy source for sperm motility. The protein is Sorbitol dehydrogenase (Sord) of Rattus norvegicus (Rat).